The primary structure comprises 167 residues: Crossover junction endodeoxyribonuclease RuvC (167 aa).

Active-site residues include aspartate 7, glutamate 67, and aspartate 139. Residues aspartate 7, glutamate 67, and aspartate 139 each coordinate Mg(2+).

The protein belongs to the RuvC family. As to quaternary structure, homodimer which binds Holliday junction (HJ) DNA. The HJ becomes 2-fold symmetrical on binding to RuvC with unstacked arms; it has a different conformation from HJ DNA in complex with RuvA. In the full resolvosome a probable DNA-RuvA(4)-RuvB(12)-RuvC(2) complex forms which resolves the HJ. The cofactor is Mg(2+).

It localises to the cytoplasm. It catalyses the reaction Endonucleolytic cleavage at a junction such as a reciprocal single-stranded crossover between two homologous DNA duplexes (Holliday junction).. Its function is as follows. The RuvA-RuvB-RuvC complex processes Holliday junction (HJ) DNA during genetic recombination and DNA repair. Endonuclease that resolves HJ intermediates. Cleaves cruciform DNA by making single-stranded nicks across the HJ at symmetrical positions within the homologous arms, yielding a 5'-phosphate and a 3'-hydroxyl group; requires a central core of homology in the junction. The consensus cleavage sequence is 5'-(A/T)TT(C/G)-3'. Cleavage occurs on the 3'-side of the TT dinucleotide at the point of strand exchange. HJ branch migration catalyzed by RuvA-RuvB allows RuvC to scan DNA until it finds its consensus sequence, where it cleaves and resolves the cruciform DNA. The sequence is that of Crossover junction endodeoxyribonuclease RuvC from Zymomonas mobilis subsp. mobilis (strain ATCC 31821 / ZM4 / CP4).